The sequence spans 342 residues: 4-hydroxythreonine-4-phosphate dehydrogenase (342 aa).

2 residues coordinate substrate: H140 and T141. H175, H220, and H275 together coordinate a divalent metal cation. Substrate contacts are provided by K283, N292, and R301.

The protein belongs to the PdxA family. In terms of assembly, homodimer. Zn(2+) is required as a cofactor. The cofactor is Mg(2+). Requires Co(2+) as cofactor.

The protein resides in the cytoplasm. It catalyses the reaction 4-(phosphooxy)-L-threonine + NAD(+) = 3-amino-2-oxopropyl phosphate + CO2 + NADH. Its pathway is cofactor biosynthesis; pyridoxine 5'-phosphate biosynthesis; pyridoxine 5'-phosphate from D-erythrose 4-phosphate: step 4/5. Catalyzes the NAD(P)-dependent oxidation of 4-(phosphooxy)-L-threonine (HTP) into 2-amino-3-oxo-4-(phosphooxy)butyric acid which spontaneously decarboxylates to form 3-amino-2-oxopropyl phosphate (AHAP). The sequence is that of 4-hydroxythreonine-4-phosphate dehydrogenase from Rhizobium meliloti (strain 1021) (Ensifer meliloti).